The chain runs to 456 residues: 26S proteasome non-ATPase regulatory subunit 12 (456 aa).

A2 carries the post-translational modification N-acetylalanine. K92 is covalently cross-linked (Glycyl lysine isopeptide (Lys-Gly) (interchain with G-Cter in SUMO1); alternate). A Glycyl lysine isopeptide (Lys-Gly) (interchain with G-Cter in SUMO2); alternate cross-link involves residue K92. Residues K221 and K368 each carry the N6-acetyllysine modification. In terms of domain architecture, PCI spans 242-420; it reads SICKHYRAIY…GIINFQRPKD (179 aa).

It belongs to the proteasome subunit p55 family. In terms of assembly, component of the 19S proteasome regulatory particle complex. The 26S proteasome consists of a 20S core particle (CP) and two 19S regulatory subunits (RP). The regulatory particle is made of a lid composed of 9 subunits including PSMD12, a base containing 6 ATPases and few additional components. Interacts with ERCC6.

Component of the 26S proteasome, a multiprotein complex involved in the ATP-dependent degradation of ubiquitinated proteins. This complex plays a key role in the maintenance of protein homeostasis by removing misfolded or damaged proteins, which could impair cellular functions, and by removing proteins whose functions are no longer required. Therefore, the proteasome participates in numerous cellular processes, including cell cycle progression, apoptosis, or DNA damage repair. The chain is 26S proteasome non-ATPase regulatory subunit 12 (PSMD12) from Homo sapiens (Human).